The primary structure comprises 351 residues: Sesquiterpene synthase 14 (351 aa).

Mg(2+) is bound by residues aspartate 87, asparagine 223, serine 227, and glutamate 231. Residues 87-91 (DEYTD) carry the DDXXD motif motif. An NSE/DTE motif motif is present at residues 223–231 (NDIASYNKE). Arginine 312 and tyrosine 313 together coordinate (2E,6E)-farnesyl diphosphate.

It belongs to the terpene synthase family. It depends on Mg(2+) as a cofactor.

It catalyses the reaction (2E,6E)-farnesyl diphosphate = pentalenene + diphosphate. Terpene cyclase that catalyzes the cyclization of farnesyl diphosphate (FPP) to pentalenene as a major product, as well as caryophyllene. This chain is Sesquiterpene synthase 14, found in Postia placenta (strain ATCC 44394 / Madison 698-R) (Brown rot fungus).